The sequence spans 224 residues: Large ribosomal subunit protein uL3 (224 aa).

Position 158 is an N5-methylglutamine (Gln158).

The protein belongs to the universal ribosomal protein uL3 family. In terms of assembly, part of the 50S ribosomal subunit. Forms a cluster with proteins L14 and L19. In terms of processing, methylated by PrmB.

Its function is as follows. One of the primary rRNA binding proteins, it binds directly near the 3'-end of the 23S rRNA, where it nucleates assembly of the 50S subunit. The sequence is that of Large ribosomal subunit protein uL3 from Paracidovorax citrulli (strain AAC00-1) (Acidovorax citrulli).